A 434-amino-acid chain; its full sequence is GPI-anchor transamidase component PIGU (434 aa).

Over 1–3 (MAA) the chain is Cytoplasmic. A helical transmembrane segment spans residues 4-22 (PLALVLVVAVTVRAALFRS). Residues 23–78 (SLAEFISERVEVVSPLSSWKRVVEGLALLDLGVSPYSGAVFHETPLIIYLFHFLID) are Lumenal-facing. The helical transmembrane segment at 79–99 (YAELVFMITDALTAIALYFAI) threads the bilayer. At 100-136 (QDFNKVVFKKQKLLLELDQYAPDVAELIRTPMEMRYI) the chain is on the cytoplasmic side. 4 consecutive transmembrane segments (helical) span residues 137-157 (PLKV…VAKS), 158-177 (TCAI…IKGS), 178-193 (VFLS…YQSL), and 194-204 (YPVTLFAPGLL). Over 205 to 221 (YLLQRQYIPVKVKSKAF) the chain is Cytoplasmic. Lys-215 lines the a cardiolipin pocket. The helical transmembrane segment at 222-243 (WIFSWEYAMMYTGSLVVIVCLS) threads the bilayer. Over 244–285 (FFLLSSWDFIPAVYGFILSVPDLTPNIGLFWYFFAEMFEHFS) the chain is Lumenal. The helical transmembrane segment at 286–305 (LFFVCVFQINVFFYTVPLAI) threads the bilayer. Topologically, residues 306–310 (KLKEH) are cytoplasmic. Position 308 (Lys-308) interacts with a cardiolipin. 2 helical membrane-spanning segments follow: residues 311–330 (PIFF…SYPT) and 331–344 (VGDV…FPVW). At 345–353 (NHLYRFLRN) the chain is on the cytoplasmic side. The chain crosses the membrane as a helical span at residues 354–371 (IFVLTCIIIVCSLLFPVL). The Lumenal segment spans residues 372 to 383 (WHLWIYAGSANS). Positions 382 and 384 each coordinate a 2-acyl-6-[6-phosphoethanolamine-alpha-D-mannosyl-(1-&gt;2)-6-phosphoethanolamine-alpha-D-mannosyl-(1-&gt;6)-2-phosphoethanolamine-alpha-D-mannosyl-(1-&gt;4)-alpha-D-glucosaminyl]-1-(1-radyl,2-acyl-sn-glycero-3-phospho)-1D-myo-inositol. A helical membrane pass occupies residues 384-405 (NFFYAITLTFNVGQILLISDYF). Residues 406-434 (YAFLRREYYLTHGLYLTAKDGTEAMLVLK) lie on the Cytoplasmic side of the membrane.

The protein belongs to the PIGU family. Heteropentamer. Part of the GPI-anchor transamidase complex, consisting of PIGK, PIGT, PIGS, PIGU and GAA1.

It is found in the endoplasmic reticulum membrane. It participates in glycolipid biosynthesis; glycosylphosphatidylinositol-anchor biosynthesis. Functionally, component of the glycosylphosphatidylinositol-anchor (GPI-anchor) transamidase (GPI-T) complex that catalyzes the formation of the linkage between a proprotein and a GPI-anchor and participates in GPI anchored protein biosynthesis. Binds the lipid portion of GPI-anchor. May act as an organizer in the transmembrane layer to recruit other subunits, and thus is essential for assembly of the complex. This chain is GPI-anchor transamidase component PIGU, found in Mus musculus (Mouse).